Consider the following 435-residue polypeptide: MTQKVNVVGAGLAGSEAAYQLAQRGIKVNLIEMRPVKQTPAHHTDKFAELVCSNSLRGNALTNAVGVLKEEMRHLDSLIITSADKARVPAGGALAVDRHDFAGYITDTLRNHPNITVLNEEVNHIPEGYTIIATGPLTTEHLAQEIVDITGKDQLYFYDAAAPIIEKDSINMDKVYLKSRYDKGEAAYLNCPMTEEEFNRFYDAVLEAEVAPVNEFEKEKYFEGCMPFEVMAERGRKTLLFGPMKPVGLEDPKTGKRPYAVVQLRQDDAAGTLYNIVGFQTHLKWGAQKEVIRLIPGLENVDIVRYGVMHRNTFINSPDVLNEKYELKGHDNLYFAGQMTGVEGYVESAASGLVAGINLAHKILDKGEVIFPRETMIGSMAYYISHAKNEKNFQPMNANFGLLPSLEKRIKDKKERYETQAKRALEYLDNYKQTL.

9–14 is an FAD binding site; sequence GAGLAG.

The protein belongs to the MnmG family. TrmFO subfamily. FAD serves as cofactor.

The protein resides in the cytoplasm. The catalysed reaction is uridine(54) in tRNA + (6R)-5,10-methylene-5,6,7,8-tetrahydrofolate + NADH + H(+) = 5-methyluridine(54) in tRNA + (6S)-5,6,7,8-tetrahydrofolate + NAD(+). It carries out the reaction uridine(54) in tRNA + (6R)-5,10-methylene-5,6,7,8-tetrahydrofolate + NADPH + H(+) = 5-methyluridine(54) in tRNA + (6S)-5,6,7,8-tetrahydrofolate + NADP(+). Its function is as follows. Catalyzes the folate-dependent formation of 5-methyl-uridine at position 54 (M-5-U54) in all tRNAs. In Staphylococcus epidermidis (strain ATCC 35984 / DSM 28319 / BCRC 17069 / CCUG 31568 / BM 3577 / RP62A), this protein is Methylenetetrahydrofolate--tRNA-(uracil-5-)-methyltransferase TrmFO.